Here is a 346-residue protein sequence, read N- to C-terminus: Elongation factor Ts (346 aa).

An involved in Mg(2+) ion dislocation from EF-Tu region spans residues 80 to 83; the sequence is TDFV.

Belongs to the EF-Ts family.

It localises to the cytoplasm. Its function is as follows. Associates with the EF-Tu.GDP complex and induces the exchange of GDP to GTP. It remains bound to the aminoacyl-tRNA.EF-Tu.GTP complex up to the GTP hydrolysis stage on the ribosome. The polypeptide is Elongation factor Ts (Streptococcus pyogenes serotype M3 (strain ATCC BAA-595 / MGAS315)).